A 140-amino-acid chain; its full sequence is MASYGDDGVELTELTLGPPGASARRARRGRKNGHPPPSSSMIQAAYFVKVSMDGTPYLRKVDVAAYGDYLELVEALNDMFYCSTIGLMDGYGEWEHAVVYEDGDGDWMLVGDVPWEMFVSSCKRMRVMRACEARGLSSNA.

A disordered region spans residues 1-40 (MASYGDDGVELTELTLGPPGASARRARRGRKNGHPPPSSS). Residues 14 to 18 (LTLGP) carry the EAR-like (transcriptional repression) motif. Residues 24–33 (RRARRGRKNG) show a composition bias toward basic residues. Residues 45–130 (AYFVKVSMDG…SCKRMRVMRA (86 aa)) enclose the PB1 domain.

Belongs to the Aux/IAA family. As to quaternary structure, homodimers and heterodimers. Expressed in roots, seedlings and flowers.

The protein resides in the nucleus. Its function is as follows. Aux/IAA proteins are short-lived transcriptional factors that function as repressors of early auxin response genes at low auxin concentrations. The chain is Auxin-responsive protein IAA26 (IAA26) from Oryza sativa subsp. japonica (Rice).